Here is a 217-residue protein sequence, read N- to C-terminus: Phosphatidylserine decarboxylase proenzyme (217 aa).

The Schiff-base intermediate with substrate; via pyruvic acid role is filled by Ser-183. Pyruvic acid (Ser); by autocatalysis is present on Ser-183.

This sequence belongs to the phosphatidylserine decarboxylase family. PSD-A subfamily. In terms of assembly, heterodimer of a large membrane-associated beta subunit and a small pyruvoyl-containing alpha subunit. Requires pyruvate as cofactor. In terms of processing, is synthesized initially as an inactive proenzyme. Formation of the active enzyme involves a self-maturation process in which the active site pyruvoyl group is generated from an internal serine residue via an autocatalytic post-translational modification. Two non-identical subunits are generated from the proenzyme in this reaction, and the pyruvate is formed at the N-terminus of the alpha chain, which is derived from the carboxyl end of the proenzyme. The post-translation cleavage follows an unusual pathway, termed non-hydrolytic serinolysis, in which the side chain hydroxyl group of the serine supplies its oxygen atom to form the C-terminus of the beta chain, while the remainder of the serine residue undergoes an oxidative deamination to produce ammonia and the pyruvoyl prosthetic group on the alpha chain.

The protein resides in the cell membrane. It carries out the reaction a 1,2-diacyl-sn-glycero-3-phospho-L-serine + H(+) = a 1,2-diacyl-sn-glycero-3-phosphoethanolamine + CO2. It functions in the pathway phospholipid metabolism; phosphatidylethanolamine biosynthesis; phosphatidylethanolamine from CDP-diacylglycerol: step 2/2. In terms of biological role, catalyzes the formation of phosphatidylethanolamine (PtdEtn) from phosphatidylserine (PtdSer). The protein is Phosphatidylserine decarboxylase proenzyme of Cupriavidus pinatubonensis (strain JMP 134 / LMG 1197) (Cupriavidus necator (strain JMP 134)).